We begin with the raw amino-acid sequence, 161 residues long: Protein-export protein SecB (161 aa).

This sequence belongs to the SecB family. Homotetramer, a dimer of dimers. One homotetramer interacts with 1 SecA dimer.

The protein localises to the cytoplasm. One of the proteins required for the normal export of preproteins out of the cell cytoplasm. It is a molecular chaperone that binds to a subset of precursor proteins, maintaining them in a translocation-competent state. It also specifically binds to its receptor SecA. The chain is Protein-export protein SecB from Coxiella burnetii (strain CbuG_Q212) (Coxiella burnetii (strain Q212)).